The sequence spans 70 residues: Small ribosomal subunit protein bS21 (70 aa).

It belongs to the bacterial ribosomal protein bS21 family.

The sequence is that of Small ribosomal subunit protein bS21 from Campylobacter curvus (strain 525.92).